Reading from the N-terminus, the 415-residue chain is uncharacterized protein (415 aa).

4 residues coordinate [4Fe-4S] cluster: Cys66, Cys72, Cys75, and Cys149. S-adenosyl-L-methionine contacts are provided by Gln249, Phe276, Glu296, and Asp344. The active-site Nucleophile is Cys370.

It belongs to the class I-like SAM-binding methyltransferase superfamily. RNA M5U methyltransferase family.

This is an uncharacterized protein from Brucella melitensis biotype 1 (strain ATCC 23456 / CCUG 17765 / NCTC 10094 / 16M).